Consider the following 297-residue polypeptide: HTH-type transcriptional regulator ArgP (297 aa).

Residues 4-60 enclose the HTH lysR-type domain; that stretch reads PDYRTLQALDAVIRERGFERAAQKLCITQSAVSQRIKQLENMFGQPLLVRTVPPRPT. The segment at residues 21-40 is a DNA-binding region (H-T-H motif); sequence FERAAQKLCITQSAVSQRIK.

Belongs to the LysR transcriptional regulatory family. In terms of assembly, homodimer.

Its function is as follows. Controls the transcription of genes involved in arginine and lysine metabolism. This Escherichia coli O7:K1 (strain IAI39 / ExPEC) protein is HTH-type transcriptional regulator ArgP.